A 108-amino-acid chain; its full sequence is Cell cycle protein GpsB (108 aa).

Residues 32 to 69 (LDNVIKDYENFNAQIEALKAENEALKKAKFQARNTVSA) adopt a coiled-coil conformation.

Belongs to the GpsB family. In terms of assembly, forms polymers through the coiled coil domains. Interacts with PBP1, MreC and EzrA.

It localises to the cytoplasm. Divisome component that associates with the complex late in its assembly, after the Z-ring is formed, and is dependent on DivIC and PBP2B for its recruitment to the divisome. Together with EzrA, is a key component of the system that regulates PBP1 localization during cell cycle progression. Its main role could be the removal of PBP1 from the cell pole after pole maturation is completed. Also contributes to the recruitment of PBP1 to the division complex. Not essential for septum formation. This chain is Cell cycle protein GpsB, found in Streptococcus pyogenes serotype M28 (strain MGAS6180).